The chain runs to 137 residues: Acidic phospholipase A2 VP8 (137 aa).

The N-terminal stretch at 1-16 (MRILWIVAVCLIGVEG) is a signal peptide. 7 disulfides stabilise this stretch: cysteine 41–cysteine 130, cysteine 43–cysteine 59, cysteine 58–cysteine 110, cysteine 64–cysteine 137, cysteine 65–cysteine 103, cysteine 72–cysteine 96, and cysteine 90–cysteine 101. Residues tyrosine 42, glycine 44, and glycine 46 each contribute to the Ca(2+) site. Residue histidine 62 is part of the active site. Aspartate 63 contributes to the Ca(2+) binding site. Aspartate 104 is an active-site residue.

The protein belongs to the phospholipase A2 family. Group II subfamily. D49 sub-subfamily. Does not form a complex. It depends on Ca(2+) as a cofactor. As to expression, expressed by the venom gland.

The protein localises to the secreted. The catalysed reaction is a 1,2-diacyl-sn-glycero-3-phosphocholine + H2O = a 1-acyl-sn-glycero-3-phosphocholine + a fatty acid + H(+). Functionally, snake venom phospholipase A2 (PLA2) that is not toxic by itself, but the synergistical mixture of a basic and this acidic protein is lethal. PLA2 catalyzes the calcium-dependent hydrolysis of the 2-acyl groups in 3-sn-phosphoglycerides. The chain is Acidic phospholipase A2 VP8 from Daboia palaestinae (Palestine viper).